Here is a 554-residue protein sequence, read N- to C-terminus: Glutamine--tRNA ligase (554 aa).

The 'HIGH' region motif lies at 34–44 (PEPNGYLHIGH). Residues 35–37 (EPN) and 41–47 (HIGHAKS) each bind ATP. L-glutamine-binding residues include Asp-67 and Tyr-212. ATP-binding positions include Thr-231, 261-262 (RL), and 269-271 (MSK). The short motif at 268–272 (VMSKR) is the 'KMSKS' region element. An interaction with tRNA region spans residues 317–324 (TKQDNTIE).

The protein belongs to the class-I aminoacyl-tRNA synthetase family. In terms of assembly, monomer.

The protein localises to the cytoplasm. It carries out the reaction tRNA(Gln) + L-glutamine + ATP = L-glutaminyl-tRNA(Gln) + AMP + diphosphate. This chain is Glutamine--tRNA ligase, found in Escherichia coli O7:K1 (strain IAI39 / ExPEC).